The following is a 329-amino-acid chain: 36 kDa antigen (329 aa).

Residues 11–31 (AILTGGGALLLGLIVLFYLAY) traverse the membrane as a helical segment.

Belongs to the membrane fusion protein (MFP) (TC 8.A.1) family.

Its subcellular location is the membrane. The polypeptide is 36 kDa antigen (Helicobacter pylori (strain J99 / ATCC 700824) (Campylobacter pylori J99)).